The following is a 118-amino-acid chain: Putative pterin-4-alpha-carbinolamine dehydratase (118 aa).

Belongs to the pterin-4-alpha-carbinolamine dehydratase family.

It carries out the reaction (4aS,6R)-4a-hydroxy-L-erythro-5,6,7,8-tetrahydrobiopterin = (6R)-L-erythro-6,7-dihydrobiopterin + H2O. The sequence is that of Putative pterin-4-alpha-carbinolamine dehydratase from Pseudomonas fluorescens (strain ATCC BAA-477 / NRRL B-23932 / Pf-5).